The primary structure comprises 431 residues: Translation initiation factor 2 subunit gamma (431 aa).

Positions 26–223 (QPCVNIGMVG…ALETQIPTPS (198 aa)) constitute a tr-type G domain. Residues 35-42 (GHVDHGKT) are G1. Residues aspartate 38, threonine 42, glycine 63, and serine 65 each contribute to the Mg(2+) site. 38-43 (DHGKTT) contributes to the GTP binding site. The G2 stretch occupies residues 63 to 67 (GISIR). Zn(2+)-binding residues include cysteine 78, cysteine 81, cysteine 93, and cysteine 96. Residues 110 to 113 (DAPG) are G3. Residues 166–169 (NKID) and 201–203 (SAQ) each bind GTP. The segment at 166–169 (NKID) is G4. The tract at residues 201–203 (SAQ) is G5.

It belongs to the TRAFAC class translation factor GTPase superfamily. Classic translation factor GTPase family. EIF2G subfamily. In terms of assembly, heterotrimer composed of an alpha, a beta and a gamma chain. The cofactor is Mg(2+).

The catalysed reaction is GTP + H2O = GDP + phosphate + H(+). Functionally, eIF-2 functions in the early steps of protein synthesis by forming a ternary complex with GTP and initiator tRNA. This Methanosarcina mazei (strain ATCC BAA-159 / DSM 3647 / Goe1 / Go1 / JCM 11833 / OCM 88) (Methanosarcina frisia) protein is Translation initiation factor 2 subunit gamma.